We begin with the raw amino-acid sequence, 119 residues long: Small ribosomal subunit protein uS13 (119 aa).

Over residues 94 to 113 (GLPVRGQRTKTNARTRKGPR) the composition is skewed to basic residues. A disordered region spans residues 94 to 119 (GLPVRGQRTKTNARTRKGPRKAIGAK).

It belongs to the universal ribosomal protein uS13 family. In terms of assembly, part of the 30S ribosomal subunit. Forms a loose heterodimer with protein S19. Forms two bridges to the 50S subunit in the 70S ribosome.

Functionally, located at the top of the head of the 30S subunit, it contacts several helices of the 16S rRNA. In the 70S ribosome it contacts the 23S rRNA (bridge B1a) and protein L5 of the 50S subunit (bridge B1b), connecting the 2 subunits; these bridges are implicated in subunit movement. Contacts the tRNAs in the A and P-sites. The sequence is that of Small ribosomal subunit protein uS13 from Nitrosomonas europaea (strain ATCC 19718 / CIP 103999 / KCTC 2705 / NBRC 14298).